A 92-amino-acid polypeptide reads, in one-letter code: Integration host factor subunit beta (92 aa).

This sequence belongs to the bacterial histone-like protein family. In terms of assembly, heterodimer of an alpha and a beta chain.

Functionally, this protein is one of the two subunits of integration host factor, a specific DNA-binding protein that functions in genetic recombination as well as in transcriptional and translational control. This chain is Integration host factor subunit beta, found in Vibrio cholerae serotype O1 (strain ATCC 39541 / Classical Ogawa 395 / O395).